Reading from the N-terminus, the 485-residue chain is NADH-quinone oxidoreductase subunit N (485 aa).

14 helical membrane-spanning segments follow: residues 8-28, 35-55, 71-91, 105-125, 127-147, 159-179, 203-223, 235-255, 271-291, 297-317, 326-346, 373-393, 408-430, and 455-475; these read LIAL…MLSI, FLNA…LWFV, GFAM…CTFA, FYLL…ANHL, SLFL…GYAF, YTIL…LVYA, LLAG…LVPF, PAPV…GVVM, VVLA…ALSQ, LLGY…IALQ, VGVY…VVSL, AAVM…LGFI, WWLV…RVAV, and IVVL…QPLI.

This sequence belongs to the complex I subunit 2 family. As to quaternary structure, NDH-1 is composed of 13 different subunits. Subunits NuoA, H, J, K, L, M, N constitute the membrane sector of the complex.

It is found in the cell inner membrane. The enzyme catalyses a quinone + NADH + 5 H(+)(in) = a quinol + NAD(+) + 4 H(+)(out). In terms of biological role, NDH-1 shuttles electrons from NADH, via FMN and iron-sulfur (Fe-S) centers, to quinones in the respiratory chain. The immediate electron acceptor for the enzyme in this species is believed to be ubiquinone. Couples the redox reaction to proton translocation (for every two electrons transferred, four hydrogen ions are translocated across the cytoplasmic membrane), and thus conserves the redox energy in a proton gradient. This Shigella flexneri protein is NADH-quinone oxidoreductase subunit N.